We begin with the raw amino-acid sequence, 593 residues long: Chromodomain Y-like protein (593 aa).

Positions 1 to 14 (MGIGNSQPNSQEAQ) are enriched in polar residues. Positions 1–30 (MGIGNSQPNSQEAQLCTLPEKAEQPTDDNT) are disordered. Positions 56–116 (TQVESIVDKR…RHNERQKEGS (61 aa)) constitute a Chromo domain. The segment at 56–304 (TQVESIVDKR…TIQTSVTGVT (249 aa)) is interaction with EZH2. At S83 the chain carries Phosphoserine. The interval 110–158 (ERQKEGSLARASRASPSNARKQISRSTHSTLSKTNSKALVVGKDHESKS) is disordered. The segment covering 117 to 129 (LARASRASPSNAR) has biased composition (low complexity). K130 carries the post-translational modification N6,N6,N6-trimethyllysine; by EHMT2; alternate. K130 is modified (N6,N6-dimethyllysine; by EHMT2; alternate). N6-methyllysine; by EHMT2; alternate is present on K130. Polar residues predominate over residues 133–146 (SRSTHSTLSKTNSK). Residues S165, S196, and S211 each carry the phosphoserine modification. Residues 200-223 (GRTSVDGFQGESPEKLDPVDQGAE) form a disordered region. Positions 357-589 (SENNSLNPEV…DSMLKYLQRK (233 aa)) are acetyl-CoA-binding domain.

In terms of assembly, forms multimers and multimerization is required for stable binding to chromatin. Interacts with HDAC1 and HDAC2 via its C-terminal acetyl-CoA-binding domain. Interacts with EZH2, EED, SUZ12, REST, EHMT1 and EHMT2. Part of a complex containing at least CDYL, REST, WIZ, SETB1, EHMT1 and EHMT2. Part of a complex containing at least CDYL, MIER1, MIER2, HDAC1 and HDAC2. Interacts with CHAF1A and CHAF1B; bridging the CAF-1 complex to the MCM2-7 (MCM) complex. Interacts with MCM3 and MCM5; bridging the CAF-1 complex to the MCM2-7 (MCM) complex. Interacts with EHMT2 and PRDM9; interaction only takes place when PRDM9 is bound to hotspot DNA. In terms of tissue distribution, highly expressed in testis (at protein level). Expressed in the hippocampus (at protein level). Expressed in the medial prefrontal cortex, prelimbic cortex, intralimbic cortex and cingulate cortex area (at protein level). Isoform 1: Expressed as 2 transcripts encoding the same protein, a ubiquitous transcript and a highly expressed testis-specific transcript.

The protein localises to the nucleus. The protein resides in the chromosome. It catalyses the reaction L-lysyl-[protein] + acetyl-CoA = N(6)-acetyl-L-lysyl-[protein] + CoA + H(+). The catalysed reaction is 3-hydroxybutanoyl-CoA = (2E)-butenoyl-CoA + H2O. Functionally, chromatin reader protein that recognizes and binds histone H3 trimethylated at 'Lys-9', dimethylated at 'Lys-27' and trimethylated at 'Lys-27' (H3K9me3, H3K27me2 and H3K27me3, respectively). Part of multimeric repressive chromatin complexes, where it is required for transmission and restoration of repressive histone marks, thereby preserving the epigenetic landscape. Required for chromatin targeting and maximal enzymatic activity of Polycomb repressive complex 2 (PRC2); acts as a positive regulator of PRC2 activity by bridging the pre-existing histone H3K27me3 and newly recruited PRC2 on neighboring nucleosomes. Acts as a corepressor for REST by facilitating histone-lysine N-methyltransferase EHMT2 recruitment and H3K9 dimethylation at REST target genes for repression. Involved in X chromosome inactivation in females: recruited to Xist RNA-coated X chromosome and facilitates propagation of H3K9me2 by anchoring EHMT2. Promotes EZH2 accumulation and H3K27me3 methylation at DNA double strand breaks (DSBs), thereby facilitating transcriptional repression at sites of DNA damage and homology-directed repair of DSBs. Required for neuronal migration during brain development by repressing expression of RHOA. By repressing the expression of SCN8A, contributes to the inhibition of intrinsic neuronal excitability and epileptogenesis. In addition to acting as a chromatin reader, acts as a hydro-lyase. Shows crotonyl-coA hydratase activity by mediating the conversion of crotonyl-CoA ((2E)-butenoyl-CoA) to beta-hydroxybutyryl-CoA (3-hydroxybutanoyl-CoA), thereby acting as a negative regulator of histone crotonylation. Histone crotonylation is required during spermatogenesis; down-regulation of histone crotonylation by CDYL regulates the reactivation of sex chromosome-linked genes in round spermatids and histone replacement in elongating spermatids. By regulating histone crotonylation and trimethylation of H3K27, may be involved in stress-induced depression-like behaviors, possibly by regulating VGF expression. May have histone acetyltransferase activity; such activity is however unsure in vivo. Not able to recognize and bind histone H3K9me3, histone H3K27me2 and histone H3K27me3, due to the presence of a N-terminal extension that inactivates the chromo domain. The protein is Chromodomain Y-like protein of Mus musculus (Mouse).